A 1549-amino-acid polypeptide reads, in one-letter code: Zinc finger MYM-type protein 4 (1549 aa).

Residue A2 is modified to N-acetylalanine. Residues 83–108 (VVSSDNEDEQDCSSKDNLVSSVHTDG) form a disordered region. Residues 97-106 (KDNLVSSVHT) show a composition bias toward polar residues. T106 bears the Phosphothreonine mark. Phosphoserine occurs at positions 109 and 121. Glycyl lysine isopeptide (Lys-Gly) (interchain with G-Cter in SUMO2) cross-links involve residues K139 and K148. A Phosphoserine modification is found at S161. K195 participates in a covalent cross-link: Glycyl lysine isopeptide (Lys-Gly) (interchain with G-Cter in SUMO2). S197 bears the Phosphoserine mark. Glycyl lysine isopeptide (Lys-Gly) (interchain with G-Cter in SUMO2) cross-links involve residues K201 and K232. At S242 the chain carries Phosphoserine. K250 is covalently cross-linked (Glycyl lysine isopeptide (Lys-Gly) (interchain with G-Cter in SUMO1); alternate). Residue K250 forms a Glycyl lysine isopeptide (Lys-Gly) (interchain with G-Cter in SUMO2); alternate linkage. The tract at residues 267-291 (GLLDRVKDEPDNAQEYSHGQQQKTQ) is disordered. Residues K273, K289, K327, K400, K428, and K430 each participate in a glycyl lysine isopeptide (Lys-Gly) (interchain with G-Cter in SUMO2) cross-link. Residues 280–290 (QEYSHGQQQKT) show a composition bias toward polar residues. MYM-type zinc fingers lie at residues 362–402 (QLFC…PKDV), 414–457 (KDFC…RHEV), 464–499 (HKLC…GSGQ), 510–544 (KKFC…AEMI), 554–592 (ELFC…QYHL), 600–631 (RNFC…LSQG), 708–742 (FQFC…KETV), 749–788 (KSFC…LIQN), and 795–829 (EDFC…SESL). Glycyl lysine isopeptide (Lys-Gly) (interchain with G-Cter in SUMO2) cross-links involve residues K1035 and K1062. 2 positions are modified to phosphoserine: S1065 and S1072. Residues K1081 and K1128 each participate in a glycyl lysine isopeptide (Lys-Gly) (interchain with G-Cter in SUMO2) cross-link. The tract at residues 1124-1185 (DSELKPFSKG…RRGRKKSVVP (62 aa)) is disordered. Residues 1125-1135 (SELKPFSKGET) are compositionally biased toward basic and acidic residues. Basic residues predominate over residues 1161 to 1182 (SRTRRRHRDGFPQPRRRGRKKS). A phosphoserine mark is found at S1182 and S1257. K1432 is covalently cross-linked (Glycyl lysine isopeptide (Lys-Gly) (interchain with G-Cter in SUMO2)). Residues S1540, S1543, and S1548 each carry the phosphoserine modification.

Functionally, plays a role in the regulation of cell morphology and cytoskeletal organization. This is Zinc finger MYM-type protein 4 (Zmym4) from Mus musculus (Mouse).